Here is a 351-residue protein sequence, read N- to C-terminus: UPF0252 protein MJECL39 (351 aa).

The next 2 helical transmembrane spans lie at 58 to 78 (FITFFIIVGLVWAIFPEVWLW) and 91 to 111 (IIICCLYFIITIILFLFLCGV).

Belongs to the UPF0252 family.

It localises to the cell membrane. The chain is UPF0252 protein MJECL39 from Methanocaldococcus jannaschii (strain ATCC 43067 / DSM 2661 / JAL-1 / JCM 10045 / NBRC 100440) (Methanococcus jannaschii).